A 276-amino-acid polypeptide reads, in one-letter code: NH(3)-dependent NAD(+) synthetase (276 aa).

43-50 (GISGGVDS) serves as a coordination point for ATP. D49 lines the Mg(2+) pocket. Residue R146 coordinates deamido-NAD(+). T166 lines the ATP pocket. E171 is a binding site for Mg(2+). The deamido-NAD(+) site is built by K179 and D186. 2 residues coordinate ATP: K195 and T217. Position 266–267 (266–267 (HK)) interacts with deamido-NAD(+).

It belongs to the NAD synthetase family. In terms of assembly, homodimer.

It catalyses the reaction deamido-NAD(+) + NH4(+) + ATP = AMP + diphosphate + NAD(+) + H(+). It functions in the pathway cofactor biosynthesis; NAD(+) biosynthesis; NAD(+) from deamido-NAD(+) (ammonia route): step 1/1. Catalyzes the ATP-dependent amidation of deamido-NAD to form NAD. Uses ammonia as a nitrogen source. The polypeptide is NH(3)-dependent NAD(+) synthetase (Vibrio campbellii (strain ATCC BAA-1116)).